A 306-amino-acid polypeptide reads, in one-letter code: UDP-N-acetylenolpyruvoylglucosamine reductase (306 aa).

The region spanning 25-188 (RVGGPADWLF…IEARFRAEPG (164 aa)) is the FAD-binding PCMH-type domain. Arg-168 is a catalytic residue. Over residues 199–214 (EQLARRDASQPTKDRS) the composition is skewed to basic and acidic residues. Positions 199 to 232 (EQLARRDASQPTKDRSAGSTFRNPAGYSSTGRAD) are disordered. Residues 215 to 229 (AGSTFRNPAGYSSTG) show a composition bias toward polar residues. Ser-217 acts as the Proton donor in catalysis. Glu-299 is an active-site residue.

This sequence belongs to the MurB family. FAD serves as cofactor.

The protein localises to the cytoplasm. It catalyses the reaction UDP-N-acetyl-alpha-D-muramate + NADP(+) = UDP-N-acetyl-3-O-(1-carboxyvinyl)-alpha-D-glucosamine + NADPH + H(+). It participates in cell wall biogenesis; peptidoglycan biosynthesis. Its function is as follows. Cell wall formation. The polypeptide is UDP-N-acetylenolpyruvoylglucosamine reductase (Paracoccus denitrificans (strain Pd 1222)).